The chain runs to 656 residues: Translation factor GUF1, mitochondrial (656 aa).

A mitochondrion-targeting transit peptide spans 1–28 (MWKGLLQSTRAAWRGPCVRAPRLPFFRR). Residues 55-235 (ERYRNFSIVA…NVIENIPGPD (181 aa)) form the tr-type G domain. GTP contacts are provided by residues 64–71 (AHVDHGKS), 128–132 (DTPGH), and 182–185 (NKID).

Belongs to the TRAFAC class translation factor GTPase superfamily. Classic translation factor GTPase family. LepA subfamily.

The protein localises to the mitochondrion inner membrane. It carries out the reaction GTP + H2O = GDP + phosphate + H(+). In terms of biological role, promotes mitochondrial protein synthesis. May act as a fidelity factor of the translation reaction, by catalyzing a one-codon backward translocation of tRNAs on improperly translocated ribosomes. Binds to mitochondrial ribosomes in a GTP-dependent manner. In Yarrowia lipolytica (strain CLIB 122 / E 150) (Yeast), this protein is Translation factor GUF1, mitochondrial.